Reading from the N-terminus, the 810-residue chain is Nuclear pore complex protein NUP88 (810 aa).

Residues 1 to 23 (MKFNFNETEDAPDSRRSPTPKEP) form a disordered region. Positions 646 to 748 (APNLKRIIDD…RARVKKSTQK (103 aa)) form a coiled coil.

In terms of assembly, part of the nuclear pore complex (NPC). The NPC has an eight-fold symmetrical structure comprising a central transport channel and two rings, the cytoplasmic and nuclear rings, to which eight filaments are attached. The cytoplasmic filaments have loose ends, while the nuclear filaments are joined in a distal ring, forming a nuclear basket. NPCs are highly dynamic in configuration and composition, and can be devided in 3 subcomplexes, the NUP62 subcomplex, the NUP107-160 subcomplex and the NUP93 subcomplex, containing approximately 30 different nucleoporin proteins.

The protein resides in the nucleus envelope. It localises to the nucleus. Its subcellular location is the nuclear pore complex. Involved in the regulation of exportin-mediated nuclear protein export. Required for resistance mediated by multiple R proteins and for the appropriate nuclear accumulation of SNC1 and of the downstream defense signaling components EDS1 and NPR1. Not involved in salt tolerance, ethylene and auxin responses, but required for systemic acquired resistance. The chain is Nuclear pore complex protein NUP88 from Arabidopsis thaliana (Mouse-ear cress).